We begin with the raw amino-acid sequence, 363 residues long: Spermatogenesis-associated protein 22 (363 aa).

4 stretches are compositionally biased toward polar residues: residues 1-12, 30-48, 98-108, and 140-157; these read MKRSLNENSARS, QPLTSNPLKDDSGISTPSD, IQSNTGRSQGG, and NDGKNSCPVSSGAQQQKQ. Disordered regions lie at residues 1-51, 98-127, and 140-170; these read MKRS…DNYD, IQSNTGRSQGGWSYRDGNKNTSLKTWNKND, and NDGKNSCPVSSGAQQQKQLRIPEPPNLSRNK.

As to quaternary structure, component of a multiprotein complex with MEIOB and RPA2. Interacts with MEIOB. Interacts with the complex BRME1:HSF2BP:BRCA2. As to expression, highly expressed in adult testis.

It localises to the chromosome. Functionally, meiosis-specific protein required for homologous recombination in meiosis I. The polypeptide is Spermatogenesis-associated protein 22 (Homo sapiens (Human)).